The chain runs to 316 residues: MKVLWVALVVALLAGCQADMEGELGSEEPLPPEQPRGQDSQPWEQVLGRLWDYLRWVQTLSDQVQEELLNTQVIQELTVLMEETMKEVKAYREELEGQLAPMAQETQARVSKELQAAQARLGSDMEDLRNRLAQYRSEVQAMLGQSTEELRARMASHLRKLRKRLLRDADDLKKRLAVYQAGASEGAERSVSAIRERLRPLVEQSQSRAATLSTQVGQPLLDRAEAWRQKLHGRLEEVGVRAQDRLDKMRQQLEEVRSKVEEQGSQIRLQAEAFQARLRSWFEPLVEDMQRQWAGLVEKVQLALHLSPTSPPSENH.

Positions 1–18 (MKVLWVALVVALLAGCQA) are cleaved as a signal peptide. 8 repeat units span residues 79 to 100 (VLME…GQLA), 101 to 122 (PMAQ…ARLG), 123 to 144 (SDME…AMLG), 145 to 166 (QSTE…KRLL), 167 to 188 (RDAD…EGAE), 189 to 210 (RSVS…SRAA), 211 to 232 (TLST…QKLH), and 233 to 254 (GRLE…QQLE). Residues 79-254 (VLMEETMKEV…RLDKMRQQLE (176 aa)) form an 8 X 22 AA approximate tandem repeats region. Methionine sulfoxide is present on methionine 142. Serine 146 carries the post-translational modification Phosphoserine. The segment at 157–167 (HLRKLRKRLLR) is LDL and other lipoprotein receptors binding. Residue 161–164 (LRKR) participates in heparin binding. The segment at 209–289 (AATLSTQVGQ…SWFEPLVEDM (81 aa)) is lipid-binding and lipoprotein association. 228–235 (RQKLHGRL) contacts heparin. The homooligomerization stretch occupies residues 265 to 316 (SQIRLQAEAFQARLRSWFEPLVEDMQRQWAGLVEKVQLALHLSPTSPPSENH). The segment at 277–289 (RLRSWFEPLVEDM) is specificity for association with VLDL.

It belongs to the apolipoprotein A1/A4/E family. Homotetramer. May interact with ABCA1; functionally associated with ABCA1 in the biogenesis of HDLs. May interact with APP/A4 amyloid-beta peptide; the interaction is extremely stable in vitro but its physiological significance is unclear. May interact with MAPT. May interact with MAP2. In the cerebrospinal fluid, interacts with secreted SORL1. Interacts with PMEL; this allows the loading of PMEL luminal fragment on ILVs to induce fibril nucleation. In terms of processing, APOE exists as multiple glycosylated and sialylated glycoforms within cells and in plasma. The extent of glycosylation and sialylation are tissue and context specific. Glycated in plasma VLDL. Post-translationally, phosphorylated by FAM20C in the extracellular medium.

Its subcellular location is the secreted. The protein localises to the extracellular space. The protein resides in the extracellular matrix. It is found in the extracellular vesicle. It localises to the endosome. Its subcellular location is the multivesicular body. APOE is an apolipoprotein, a protein associating with lipid particles, that mainly functions in lipoprotein-mediated lipid transport between organs via the plasma and interstitial fluids. APOE is a core component of plasma lipoproteins and is involved in their production, conversion and clearance. Apolipoproteins are amphipathic molecules that interact both with lipids of the lipoprotein particle core and the aqueous environment of the plasma. As such, APOE associates with chylomicrons, chylomicron remnants, very low density lipoproteins (VLDL) and intermediate density lipoproteins (IDL) but shows a preferential binding to high-density lipoproteins (HDL). It also binds a wide range of cellular receptors including the LDL receptor/LDLR and the very low-density lipoprotein receptor/VLDLR that mediate the cellular uptake of the APOE-containing lipoprotein particles. Finally, APOE also has a heparin-binding activity and binds heparan-sulfate proteoglycans on the surface of cells, a property that supports the capture and the receptor-mediated uptake of APOE-containing lipoproteins by cells. This Ovis aries (Sheep) protein is Apolipoprotein E (APOE).